Reading from the N-terminus, the 133-residue chain is Histone H2A.1 (133 aa).

Residues 1 to 23 (MSTTGKGGKAKGKTASSKQVSRS) are disordered. Serine 2 is subject to N-acetylserine. N6-acetyllysine occurs at positions 6, 9, 11, 13, and 18. The residue at position 123 (serine 123) is a Phosphoserine. Lysine 124 is covalently cross-linked (Glycyl lysine isopeptide (Lys-Gly) (interchain with G-Cter in ubiquitin)). A Phosphoserine modification is found at serine 129.

This sequence belongs to the histone H2A family. In terms of assembly, the nucleosome is a histone octamer containing two molecules each of H2A, H2B, H3 and H4 assembled in one H3-H4 heterotetramer and two H2A-H2B heterodimers. The octamer wraps approximately 147 bp of DNA. In terms of processing, monoubiquitination of Lys-124 gives a specific tag for epigenetic transcriptional repression. Post-translationally, acetylation occurs almost exclusively in the MAC.

It localises to the nucleus. Its subcellular location is the chromosome. Functionally, core component of nucleosome. Nucleosomes wrap and compact DNA into chromatin, limiting DNA accessibility to the cellular machineries which require DNA as a template. Histones thereby play a central role in transcription regulation, DNA repair, DNA replication and chromosomal stability. DNA accessibility is regulated via a complex set of post-translational modifications of histones, also called histone code, and nucleosome remodeling. The polypeptide is Histone H2A.1 (HTA2) (Tetrahymena pyriformis).